A 449-amino-acid polypeptide reads, in one-letter code: Wilms tumor protein homolog (449 aa).

Residues 49 to 84 are disordered; the sequence is YGSLGGPAPPPAPPPPPPPPHSFIKQEPSWGGAEPH. Pro residues predominate over residues 55-69; that stretch reads PAPPPAPPPPPPPPH. Residues Lys73 and Lys177 each participate in a glycyl lysine isopeptide (Lys-Gly) (interchain with G-Cter in SUMO) cross-link. The short motif at 236–244 is the 9aaTAD element; it reads MTWNQMNLG. 3 consecutive C2H2-type zinc fingers follow at residues 323 to 347, 353 to 377, and 383 to 405; these read FMCA…SRKH, YQCD…QRRH, and FQCK…TRTH. Important for interaction with target DNA regions lie at residues 367–381 and 393–401; these read SDQL…TGVK and SRSDHLKTH. The KTS motif signature appears at 408–410; the sequence is KTS. A C2H2-type 4 zinc finger spans residues 414–438; that stretch reads FSCRWHSCQKKFARSDELVRHHNMH. Residue Lys444 forms a Glycyl lysine isopeptide (Lys-Gly) (interchain with G-Cter in SUMO2) linkage.

This sequence belongs to the EGR C2H2-type zinc-finger protein family. In terms of assembly, interacts with ZNF224 via the zinc-finger region. Interacts with WTAP, AMER1 and SRY. Interacts with RBM4. Homodimer. Interacts with WTIP. Interacts with actively translating polysomes. Detected in nuclear ribonucleoprotein (mRNP) particles. Interacts with U2AF2. Interacts with HNRNPU via the zinc-finger region. Isoform 1 and isoform 3 interacts with CITED2. Detected in neurons of the embryonic dorsal root ganglion and in Sertoli cells of the adult testis (at protein level). Detected in kidney.

The protein localises to the nucleus speckle. It is found in the nucleus. The protein resides in the nucleoplasm. Its subcellular location is the nucleolus. It localises to the cytoplasm. In terms of biological role, transcription factor that plays an important role in cellular development and cell survival. Recognizes and binds to the DNA sequence 5'-GCG(T/G)GGGCG-3'. Regulates the expression of numerous target genes, including EPO. Plays an essential role for development of the urogenital system. It has a tumor suppressor as well as an oncogenic role in tumor formation. Function may be isoform-specific: isoforms lacking the KTS motif may act as transcription factors. Isoforms containing the KTS motif may bind mRNA and play a role in mRNA metabolism or splicing. Isoform 1 has lower affinity for DNA, and can bind RNA. The chain is Wilms tumor protein homolog (Wt1) from Mus musculus (Mouse).